The sequence spans 363 residues: MKPSIQSRLEQLVERFEEVNALLSDASVIANQDKFRDLSREFAEIEPVVKCFQAWRQSLEDIDAATELAKDGDADMREMAEEELASARARSEELDEELQRLMLPKDPNDTKNVFLEIRAGTGGDEAAIFAGDLFRMYSRYAEKRRWQVEVLSENEGEHGGFKEIIARLSGDGVYGTLKFESGAHRVQRVPETESQGRIHTSACTVAVMPEADEAEAVEINKADLRVDTFRSSGAGGQHVNKTDSAIRITHLPTGIVVECQEERSQHKNRAKALSLLASRLQNAELEKQQKSMAETRKSLVGSGDRSERIRTYNFPQGRVTDHRINLTLYKLDEVIAGDLDAVVVPLQQEHQAELLADMANEQQ.

Gln-237 is subject to N5-methylglutamine.

This sequence belongs to the prokaryotic/mitochondrial release factor family. Methylated by PrmC. Methylation increases the termination efficiency of RF1.

It is found in the cytoplasm. Its function is as follows. Peptide chain release factor 1 directs the termination of translation in response to the peptide chain termination codons UAG and UAA. In Marinobacter nauticus (strain ATCC 700491 / DSM 11845 / VT8) (Marinobacter aquaeolei), this protein is Peptide chain release factor 1.